Consider the following 184-residue polypeptide: dCTP deaminase (184 aa).

107–112 (KSTYAR) lines the dCTP pocket. The Proton donor/acceptor role is filled by Glu133. DCTP contacts are provided by Gln152, Tyr166, and Gln176.

The protein belongs to the dCTP deaminase family. As to quaternary structure, homotrimer.

The catalysed reaction is dCTP + H2O + H(+) = dUTP + NH4(+). Its pathway is pyrimidine metabolism; dUMP biosynthesis; dUMP from dCTP (dUTP route): step 1/2. In terms of biological role, catalyzes the deamination of dCTP to dUTP. The chain is dCTP deaminase from Acidiphilium cryptum (strain JF-5).